A 382-amino-acid polypeptide reads, in one-letter code: Pentatricopeptide repeat-containing protein 2, mitochondrial (382 aa).

A PPR repeat occupies 159-193 (TSFNILMDMLFTKGQYERAVEVLVEMRNQRVRFSK).

Belongs to the PTCD2 family.

The protein resides in the mitochondrion. Its function is as follows. May be involved in mitochondrial RNA maturation and mitochondrial respiratory chain function. This is Pentatricopeptide repeat-containing protein 2, mitochondrial (ptcd2) from Xenopus laevis (African clawed frog).